Reading from the N-terminus, the 703-residue chain is Elongation factor G 2 (703 aa).

Residues 8–291 (ELYRNIGIVA…AVIDYLPAPS (284 aa)) enclose the tr-type G domain. GTP is bound by residues 17 to 24 (AHVDAGKT), 89 to 93 (DTPGH), and 143 to 146 (NKMD).

Belongs to the TRAFAC class translation factor GTPase superfamily. Classic translation factor GTPase family. EF-G/EF-2 subfamily.

Its subcellular location is the cytoplasm. In terms of biological role, catalyzes the GTP-dependent ribosomal translocation step during translation elongation. During this step, the ribosome changes from the pre-translocational (PRE) to the post-translocational (POST) state as the newly formed A-site-bound peptidyl-tRNA and P-site-bound deacylated tRNA move to the P and E sites, respectively. Catalyzes the coordinated movement of the two tRNA molecules, the mRNA and conformational changes in the ribosome. This chain is Elongation factor G 2 (fusB), found in Pseudomonas putida (strain ATCC 47054 / DSM 6125 / CFBP 8728 / NCIMB 11950 / KT2440).